The primary structure comprises 287 residues: Small ribosomal subunit biogenesis GTPase RsgA (287 aa).

One can recognise a CP-type G domain in the interval 61 to 218 (SSELIRPTVA…LVDTPGFTTL (158 aa)). GTP-binding positions include 110-113 (NKED) and 161-169 (GPSGAGKST). Residues Cys-242, Cys-247, His-249, and Cys-255 each coordinate Zn(2+).

It belongs to the TRAFAC class YlqF/YawG GTPase family. RsgA subfamily. As to quaternary structure, monomer. Associates with 30S ribosomal subunit, binds 16S rRNA. The cofactor is Zn(2+).

The protein localises to the cytoplasm. Its function is as follows. One of several proteins that assist in the late maturation steps of the functional core of the 30S ribosomal subunit. Helps release RbfA from mature subunits. May play a role in the assembly of ribosomal proteins into the subunit. Circularly permuted GTPase that catalyzes slow GTP hydrolysis, GTPase activity is stimulated by the 30S ribosomal subunit. The chain is Small ribosomal subunit biogenesis GTPase RsgA from Clostridium perfringens (strain ATCC 13124 / DSM 756 / JCM 1290 / NCIMB 6125 / NCTC 8237 / Type A).